The primary structure comprises 135 residues: Large ribosomal subunit protein eL27 (135 aa).

This sequence belongs to the eukaryotic ribosomal protein eL27 family.

This Pisum sativum (Garden pea) protein is Large ribosomal subunit protein eL27 (RPL27).